A 785-amino-acid chain; its full sequence is Rho GTPase-activating protein 10 (785 aa).

A BAR domain is found at 7 to 262 (EFSDCYLDSP…IRQNPKDHKR (256 aa)). A PH domain is found at 265–372 (QFTAEGYLYV…WLEVLGGKEA (108 aa)). In terms of domain architecture, Rho-GAP spans 389-574 (AQLDKMGFTI…ILIENHEKIF (186 aa)). A disordered region spans residues 576–708 (TPPDATLPEP…PAVTPPSPKL (133 aa)). Residues 584–595 (EPGPLSAPPNAP) show a composition bias toward pro residues. Basic residues predominate over residues 598-608 (QSKRQGQRTKR). The span at 622-632 (GDRPSLPKEDT) shows a compositional bias: basic and acidic residues. Over residues 633–650 (PPSSLDSLSSPSPTTATA) the composition is skewed to low complexity. Residues 675-697 (APSQARSSAVQWLNPQSPTTPSC) show a composition bias toward polar residues. Residues 727–785 (IISRKARAVYPCEAEHSSELSFEIGAIFEDVQTSREPGWLEGTLNGKRGLIPQNYVKLL) enclose the SH3 domain.

Interacts with PKN3. Interacts with caspase-activated PAK2 proteolytic fragment PAK-2p34; the interaction does not affect ARHGAP10 GTPase activation activity towards RHOA and CDC42. Interacts via its SH3 domain with PTK2/FAK1. Interacts with PTK2B/PYK2; the interaction negatively regulates ARHGAP10 GTPase-activating activity. Interacts with MICAL1 and WDR44; complex formation might transit from GRAF2/ARHGAP10-MICAL1 to GRAF2/ARHGAP10-WDR44 complexes.

Its subcellular location is the cytoplasm. It localises to the perinuclear region. The protein localises to the cell membrane. The protein resides in the endosome membrane. Its function is as follows. GTPase-activating protein that catalyzes the conversion of active GTP-bound Rho GTPases to their inactive GDP-bound form, thus suppressing various Rho GTPase-mediated cellular processes. Also converts Cdc42 to an inactive GDP-bound state. Essential for PTKB2 regulation of cytoskeletal organization via Rho family GTPases. Inhibits PAK2 proteolytic fragment PAK-2p34 kinase activity and changes its localization from the nucleus to the perinuclear region. Stabilizes PAK-2p34 thereby increasing stimulation of cell death. Associates with MICAL1 on the endosomal membrane to promote Rab8-Rab10-dependent tubule extension. After dissociation with MICAL1, recruits WDR44 which connects the endoplasmic reticulum (ER) with the endosomal tubule, thereby participating in the export of a subset of neosynthesized proteins. This Bos taurus (Bovine) protein is Rho GTPase-activating protein 10 (ARHGAP10).